The sequence spans 158 residues: 2-C-methyl-D-erythritol 2,4-cyclodiphosphate synthase (158 aa).

Residues Asp8 and His10 each coordinate a divalent metal cation. 4-CDP-2-C-methyl-D-erythritol 2-phosphate is bound by residues 8-10 and 34-35; these read DVH and HS. His42 contributes to the a divalent metal cation binding site. Residues 56–58, 61–65, 100–106, 132–135, and Phe139 contribute to the 4-CDP-2-C-methyl-D-erythritol 2-phosphate site; these read DIG, FPDTD, AQKPKML, and TTEE.

It belongs to the IspF family. In terms of assembly, homotrimer. It depends on a divalent metal cation as a cofactor.

The catalysed reaction is 4-CDP-2-C-methyl-D-erythritol 2-phosphate = 2-C-methyl-D-erythritol 2,4-cyclic diphosphate + CMP. The protein operates within isoprenoid biosynthesis; isopentenyl diphosphate biosynthesis via DXP pathway; isopentenyl diphosphate from 1-deoxy-D-xylulose 5-phosphate: step 4/6. Involved in the biosynthesis of isopentenyl diphosphate (IPP) and dimethylallyl diphosphate (DMAPP), two major building blocks of isoprenoid compounds. Catalyzes the conversion of 4-diphosphocytidyl-2-C-methyl-D-erythritol 2-phosphate (CDP-ME2P) to 2-C-methyl-D-erythritol 2,4-cyclodiphosphate (ME-CPP) with a corresponding release of cytidine 5-monophosphate (CMP). The chain is 2-C-methyl-D-erythritol 2,4-cyclodiphosphate synthase from Clostridium beijerinckii (strain ATCC 51743 / NCIMB 8052) (Clostridium acetobutylicum).